Reading from the N-terminus, the 328-residue chain is Malate dehydrogenase (328 aa).

11–17 (GAAGQIG) is an NAD(+) binding site. Arginine 94 and arginine 100 together coordinate substrate. Residues asparagine 107, glutamine 114, and 131 to 133 (VGN) each bind NAD(+). Asparagine 133 and arginine 164 together coordinate substrate. Histidine 189 acts as the Proton acceptor in catalysis.

This sequence belongs to the LDH/MDH superfamily. MDH type 2 family.

The catalysed reaction is (S)-malate + NAD(+) = oxaloacetate + NADH + H(+). Catalyzes the reversible oxidation of malate to oxaloacetate. This chain is Malate dehydrogenase, found in Acinetobacter baumannii (strain AB0057).